The primary structure comprises 262 residues: ATP synthase subunit a (262 aa).

Helical transmembrane passes span I30–F50, W64–G84, L91–G111, I123–S143, F149–I169, L195–L215, and I220–L240.

It belongs to the ATPase A chain family. F-type ATPases have 2 components, CF(1) - the catalytic core - and CF(0) - the membrane proton channel. CF(1) has five subunits: alpha(3), beta(3), gamma(1), delta(1), epsilon(1). CF(0) has three main subunits: a, b and c.

It is found in the mitochondrion inner membrane. Its function is as follows. Mitochondrial membrane ATP synthase (F(1)F(0) ATP synthase or Complex V) produces ATP from ADP in the presence of a proton gradient across the membrane which is generated by electron transport complexes of the respiratory chain. F-type ATPases consist of two structural domains, F(1) - containing the extramembraneous catalytic core and F(0) - containing the membrane proton channel, linked together by a central stalk and a peripheral stalk. During catalysis, ATP synthesis in the catalytic domain of F(1) is coupled via a rotary mechanism of the central stalk subunits to proton translocation. Key component of the proton channel; it may play a direct role in the translocation of protons across the membrane. The chain is ATP synthase subunit a (ATP6) from Allomyces macrogynus.